The following is a 224-amino-acid chain: UPF0758 protein PSHAa2643 (224 aa).

Positions 102–224 constitute an MPN domain; the sequence is IFNSPNAVYD…CVSFAERGLI (123 aa). Zn(2+)-binding residues include His173, His175, and Asp186. Positions 173-186 match the JAMM motif motif; it reads HNHPSGIAEPSQAD.

This sequence belongs to the UPF0758 family.

The chain is UPF0758 protein PSHAa2643 from Pseudoalteromonas translucida (strain TAC 125).